The sequence spans 364 residues: Monocarboxylate 2-oxoacid-binding periplasmic protein all3028 (364 aa).

A signal peptide spans 1–26 (MKRREVLNTAAIATATTALVSCTQTN). Substrate contacts are provided by residues 103 to 104 (YY), Q160, and R181. Q160 serves as a coordination point for Na(+). Na(+) is bound by residues E218, W219, and E244.

The protein belongs to the bacterial solute-binding protein 7 family. In terms of assembly, homodimer. The complex comprises the extracytoplasmic solute receptor protein all3028, and the two putative transmembrane proteins alr3026 and alr3027.

It is found in the periplasm. With respect to regulation, pyruvate uptake inhibited by 2-oxobutyrate, 2-oxovalerate, 2-oxoisovalerate, 2-oxoisocaproate and 2-oxo-3-methylvalerate. Part of the tripartite ATP-independent periplasmic (TRAP) transport system involved in the uptake of monocarboxylate 2-oxoacids. This protein specifically binds monocarboxylate 2-oxoacids including pyruvate, 2-oxobutyrate, 2-oxovalerate, 2-oxoisovalerate, 2-oxoisocaproate and 2-oxo-3-methylvalerate. Is not able to bind mannitol. The polypeptide is Monocarboxylate 2-oxoacid-binding periplasmic protein all3028 (Nostoc sp. (strain PCC 7120 / SAG 25.82 / UTEX 2576)).